The sequence spans 256 residues: MADWSAEQYLKFEDERTRPARELLAQVPVLAPRKVADIGCGPGNSTELLVERWPQAAVIGVDTSADMLRQARERLPQQKFIEANVAHWAPPPDTDVLFANAVFQWVPDHLKHLKRLVSGLETGGALAVQMPDNLDEPSHILMREVAFEEPWRHQLSKAAESRDMLPKPGVYYDALRPLCSRLEIWHTVYNHVLDDAAAIVEWVKGTGLRPFIDPLDLHERKAYLAAYTARVAAAYPPQADGKVLLRFPRIFFVAIK.

Belongs to the methyltransferase superfamily. Tam family.

It localises to the cytoplasm. It catalyses the reaction trans-aconitate + S-adenosyl-L-methionine = (E)-3-(methoxycarbonyl)pent-2-enedioate + S-adenosyl-L-homocysteine. In terms of biological role, catalyzes the S-adenosylmethionine monomethyl esterification of trans-aconitate. The sequence is that of Trans-aconitate 2-methyltransferase from Rhodopseudomonas palustris (strain BisB5).